A 251-amino-acid chain; its full sequence is Triosephosphate isomerase (251 aa).

Substrate is bound at residue 9–11 (NWK). Residue His-95 is the Electrophile of the active site. The active-site Proton acceptor is Glu-167. Substrate contacts are provided by residues Gly-173, Ser-213, and 234 to 235 (GG).

Belongs to the triosephosphate isomerase family. In terms of assembly, homodimer.

It localises to the cytoplasm. The catalysed reaction is D-glyceraldehyde 3-phosphate = dihydroxyacetone phosphate. It functions in the pathway carbohydrate biosynthesis; gluconeogenesis. Its pathway is carbohydrate degradation; glycolysis; D-glyceraldehyde 3-phosphate from glycerone phosphate: step 1/1. Functionally, involved in the gluconeogenesis. Catalyzes stereospecifically the conversion of dihydroxyacetone phosphate (DHAP) to D-glyceraldehyde-3-phosphate (G3P). The chain is Triosephosphate isomerase from Enterococcus faecalis (strain ATCC 700802 / V583).